We begin with the raw amino-acid sequence, 548 residues long: Chaperonin GroEL (548 aa).

ATP is bound by residues 30–33 (TLGP), Lys-51, 87–91 (DGTTT), Gly-415, 479–481 (NAA), and Asp-495.

The protein belongs to the chaperonin (HSP60) family. In terms of assembly, forms a cylinder of 14 subunits composed of two heptameric rings stacked back-to-back. Interacts with the co-chaperonin GroES.

The protein localises to the cytoplasm. The enzyme catalyses ATP + H2O + a folded polypeptide = ADP + phosphate + an unfolded polypeptide.. Its function is as follows. Together with its co-chaperonin GroES, plays an essential role in assisting protein folding. The GroEL-GroES system forms a nano-cage that allows encapsulation of the non-native substrate proteins and provides a physical environment optimized to promote and accelerate protein folding. The protein is Chaperonin GroEL of Klebsiella aerogenes (strain ATCC 13048 / DSM 30053 / CCUG 1429 / JCM 1235 / KCTC 2190 / NBRC 13534 / NCIMB 10102 / NCTC 10006 / CDC 819-56) (Enterobacter aerogenes).